The primary structure comprises 1012 residues: Klotho (1012 aa).

A signal peptide spans 1–33; it reads MPASAPPRRPRPPPPSLSLLLVLLGLGGRRLRA. Residues 34-981 lie on the Extracellular side of the membrane; it reads EPGDGAQTWA…ECSFFHTRKS (948 aa). Glycosyl hydrolase-1 stretches follow at residues 57-506 and 515-953; these read FQGT…KNGF and LEGT…SNGF. 7 N-linked (GlcNAc...) asparagine glycosylation sites follow: Asn-106, Asn-159, Asn-283, Asn-344, Asn-607, Asn-612, and Asn-694. A helical membrane pass occupies residues 982–1002; it reads LLAFIAFLFFASIISLSLIFY. Residues 1003–1012 are Cytoplasmic-facing; that stretch reads YSKKGRRSYK.

The protein belongs to the glycosyl hydrolase 1 family. Klotho subfamily. As to quaternary structure, homodimer. Interacts with FGF23 and FGFR1. Post-translationally, N-glycosylated. As to expression, present in cortical renal tubules (at protein level). Soluble peptide is present in serum and cerebrospinal fluid. Expressed in kidney, placenta, small intestine and prostate. Down-regulated in renal cell carcinomas, hepatocellular carcinomas, and in chronic renal failure kidney.

It is found in the cell membrane. Its subcellular location is the apical cell membrane. It localises to the secreted. It catalyses the reaction a beta-D-glucuronoside + H2O = D-glucuronate + an alcohol. In terms of biological role, may have weak glycosidase activity towards glucuronylated steroids. However, it lacks essential active site Glu residues at positions 239 and 872, suggesting it may be inactive as a glycosidase in vivo. May be involved in the regulation of calcium and phosphorus homeostasis by inhibiting the synthesis of active vitamin D. Essential factor for the specific interaction between FGF23 and FGFR1. The Klotho peptide generated by cleavage of the membrane-bound isoform may be an anti-aging circulating hormone which would extend life span by inhibiting insulin/IGF1 signaling. The sequence is that of Klotho (KL) from Homo sapiens (Human).